A 656-amino-acid polypeptide reads, in one-letter code: Choline transporter-like protein 3 (656 aa).

The chain crosses the membrane as a helical span at residues 37-57; it reads WLVLFFLFWTGLVFIMGYSVV. 2 N-linked (GlcNAc...) asparagine glycosylation sites follow: Asn-141 and Asn-154. The next 5 membrane-spanning stretches (helical) occupy residues 216 to 236, 242 to 262, 288 to 308, 337 to 357, and 381 to 401; these read DTILGLCVFTFALSLAMLFAF, LLIHIIISLVILGLLFVCGVL, LAFAIISTVVTVLLLALIFTL, LWTCAILIFFWVLWVAVLLSL, and YMWWYHLIGLIWTSEFILACQ. Asn-506 and Asn-524 each carry an N-linked (GlcNAc...) asparagine glycan. The helical transmembrane segment at 537–557 threads the bilayer; sequence FVIFLGKVLVVCFSIFGGLMA. Asn-559 is a glycosylation site (N-linked (GlcNAc...) asparagine). The helical transmembrane segment at 566–586 threads the bilayer; the sequence is VWAIPLLLVAFFACVVAHSFL. Residues 634 to 656 are disordered; it reads AKSQGQKDALPNEEGTELQPIVR.

The protein belongs to the CTL (choline transporter-like) family.

Its subcellular location is the membrane. The sequence is that of Choline transporter-like protein 3 (Slc44a3) from Mus musculus (Mouse).